We begin with the raw amino-acid sequence, 476 residues long: MEKRLRLAPSPTGLFHIGTARTALFNWLYAQKIGGKFLIRIEDTDFLRSKSEYTKNILQGLKWLGLKWDEEPIKQSDRISIHKSHIKKLLECGAAYRCFTSEDEISELREEQKKKGLPPKHDNRHRSLSKEEIETFISQGRTSVIRFKIDEKIVIKWIDQIRGEIKWQGKDLGGDLVLSRRAKGYEIGDPLYNLAVVVDDNFMNITHVVRGEDHISNTAKQILIYNALNFNLPTFSHTPLILNSEGKKLSKRDCVTSIDEFREMGYLPEALSNYMAFLGWSPKTADREILSLEEISEIFDLSEINKAGAKFSWEKLNWINSQYIKNMESIKLVEIMRTYWDENGWEPPSQEWANKLAILIRDSMTLLKDSIDQSKPFFLIPTIQKEGQDFLENRESKLSLKLILNYLIEKNTIKLNKEKAKEIINEISKKHNIKKGILMKSLRVAFFGSLIGPDLIQSWELFAESKTDRTRIERCL.

The 'HIGH' region motif lies at 9 to 19; that stretch reads PSPTGLFHIGT. The 'KMSKS' region motif lies at 248–252; sequence KLSKR. Lys-251 serves as a coordination point for ATP.

It belongs to the class-I aminoacyl-tRNA synthetase family. Glutamate--tRNA ligase type 1 subfamily. In terms of assembly, monomer.

The protein resides in the cytoplasm. The enzyme catalyses tRNA(Glu) + L-glutamate + ATP = L-glutamyl-tRNA(Glu) + AMP + diphosphate. Functionally, catalyzes the attachment of glutamate to tRNA(Glu) in a two-step reaction: glutamate is first activated by ATP to form Glu-AMP and then transferred to the acceptor end of tRNA(Glu). This is Glutamate--tRNA ligase from Prochlorococcus marinus (strain AS9601).